Consider the following 254-residue polypeptide: Casein kinase II subunit beta-2 (254 aa).

This sequence belongs to the casein kinase 2 subunit beta family. In terms of assembly, tetramer composed of two alpha chains, one beta chain and one beta' chain. In terms of processing, phosphorylated by alpha subunit.

Its function is as follows. Regulatory subunit of casein kinase II/CK2. As part of the kinase complex regulates the basal catalytic activity of the alpha subunit a constitutively active serine/threonine-protein kinase that phosphorylates a large number of substrates containing acidic residues C-terminal to the phosphorylated serine or threonine. The polypeptide is Casein kinase II subunit beta-2 (Schizosaccharomyces pombe (strain 972 / ATCC 24843) (Fission yeast)).